We begin with the raw amino-acid sequence, 1006 residues long: DNA polymerase (1006 aa).

Belongs to the DNA polymerase type-B family. As to quaternary structure, interacts with OPG148. Component of the Uracil-DNA glycosylase(UDG)-OPG148-polymerase complex; OPG148 and OPG116/UDG form a heterodimeric processivity factor that associates with OPG071 to form the processive polymerase holoenzyme.

The enzyme catalyses DNA(n) + a 2'-deoxyribonucleoside 5'-triphosphate = DNA(n+1) + diphosphate. Its function is as follows. Catalyzes DNA synthesis. Acquires processivity by associating with a heterodimeric processivity factor comprised of the viral OPG148 and OPG116 proteins, thereby forming the DNA polymerase holoenzyme. Displays 3'- to 5' exonuclease activity. Might participate in viral DNA recombination. Does not perform OPG116/D4synthesis across an abasic site. In Monkeypox virus, this protein is DNA polymerase (OPG071).